A 400-amino-acid polypeptide reads, in one-letter code: Acetate kinase (400 aa).

Asn-10 contributes to the Mg(2+) binding site. Lys-17 contributes to the ATP binding site. Arg-91 contributes to the substrate binding site. Residue Asp-148 is the Proton donor/acceptor of the active site. ATP-binding positions include 208–212 (HLGNG), 283–285 (DCR), and 331–335 (GIGEN). Glu-385 provides a ligand contact to Mg(2+).

Belongs to the acetokinase family. As to quaternary structure, homodimer. It depends on Mg(2+) as a cofactor. Mn(2+) is required as a cofactor.

The protein localises to the cytoplasm. It catalyses the reaction acetate + ATP = acetyl phosphate + ADP. The protein operates within metabolic intermediate biosynthesis; acetyl-CoA biosynthesis; acetyl-CoA from acetate: step 1/2. Functionally, catalyzes the formation of acetyl phosphate from acetate and ATP. Can also catalyze the reverse reaction. This is Acetate kinase from Shewanella putrefaciens (strain CN-32 / ATCC BAA-453).